Consider the following 359-residue polypeptide: MLENRVKTKQIFIGGVAIGGDAPISTQSMTFSKTADIESTKNQIDRLKLAGADLVRVAVSNEKDALALKELKKVSPLPLIADIHFHYKFALIAAQSVDAIRINPGNIGSKDKIKAVVDACKEKNIPIRIGVNAGSLEKRFDQKYGPTPKGMVESALYNAKLLEDLDFTDFKISLKASDVMRTIEAYRMLRPLVIYPFHLGVTEAGNLFSSSIKSAMALGGLLMEGIGDTMRVSITGELENEIKVARAILRHSGRLKEGINWISCPTCGRIEANLVDMASKVEKRLSHIKTPLDISVMGCVVNALGEAKHADMAIAFGNRSGLIIKEGKVIHKLAEKDLFETFVIEVENLAKEREKSLKD.

Cysteine 264, cysteine 267, cysteine 299, and glutamate 306 together coordinate [4Fe-4S] cluster.

The protein belongs to the IspG family. The cofactor is [4Fe-4S] cluster.

It carries out the reaction (2E)-4-hydroxy-3-methylbut-2-enyl diphosphate + oxidized [flavodoxin] + H2O + 2 H(+) = 2-C-methyl-D-erythritol 2,4-cyclic diphosphate + reduced [flavodoxin]. Its pathway is isoprenoid biosynthesis; isopentenyl diphosphate biosynthesis via DXP pathway; isopentenyl diphosphate from 1-deoxy-D-xylulose 5-phosphate: step 5/6. In terms of biological role, converts 2C-methyl-D-erythritol 2,4-cyclodiphosphate (ME-2,4cPP) into 1-hydroxy-2-methyl-2-(E)-butenyl 4-diphosphate. In Helicobacter pylori (strain P12), this protein is 4-hydroxy-3-methylbut-2-en-1-yl diphosphate synthase (flavodoxin).